The primary structure comprises 305 residues: HTH-type transcriptional activator BauR (305 aa).

The region spanning 15–72 (FDIRLLRIFKTIVECGSFSAAESTLGLSRSAISLHMGDLEKRLGMRLCQRGRAGFALT) is the HTH lysR-type domain.

Belongs to the LysR transcriptional regulatory family.

Its function is as follows. Involved in the degradation of beta-alanine. BauR activates the transcription of the bauABCD operon. The polypeptide is HTH-type transcriptional activator BauR (bauR) (Pseudomonas aeruginosa (strain ATCC 15692 / DSM 22644 / CIP 104116 / JCM 14847 / LMG 12228 / 1C / PRS 101 / PAO1)).